A 182-amino-acid chain; its full sequence is Putative manganese efflux pump MntP (182 aa).

6 helical membrane-spanning segments follow: residues 6–26 (LIPLIIMAFALGMDAFSVSLG), 37–57 (ILYIGMTIGIFHIIMPFIGMV), 71–91 (HFAGAILLIGLGFYIVYSTIL), 101–121 (IGISLFVFAFGVSIDSFSVGL), 131–151 (IITILLFGFVSMLLAWIGLLI), and 162–182 (YGEIVGGIILVGFGLYILFPI).

The protein belongs to the MntP (TC 9.B.29) family.

The protein localises to the cell membrane. Its function is as follows. Probably functions as a manganese efflux pump. The polypeptide is Putative manganese efflux pump MntP (Bacillus cereus (strain G9842)).